The sequence spans 232 residues: Phosphatidylserine decarboxylase proenzyme (232 aa).

Serine 190 serves as the catalytic Schiff-base intermediate with substrate; via pyruvic acid. Serine 190 carries the post-translational modification Pyruvic acid (Ser); by autocatalysis.

This sequence belongs to the phosphatidylserine decarboxylase family. PSD-A subfamily. As to quaternary structure, heterodimer of a large membrane-associated beta subunit and a small pyruvoyl-containing alpha subunit. Pyruvate is required as a cofactor. Is synthesized initially as an inactive proenzyme. Formation of the active enzyme involves a self-maturation process in which the active site pyruvoyl group is generated from an internal serine residue via an autocatalytic post-translational modification. Two non-identical subunits are generated from the proenzyme in this reaction, and the pyruvate is formed at the N-terminus of the alpha chain, which is derived from the carboxyl end of the proenzyme. The post-translation cleavage follows an unusual pathway, termed non-hydrolytic serinolysis, in which the side chain hydroxyl group of the serine supplies its oxygen atom to form the C-terminus of the beta chain, while the remainder of the serine residue undergoes an oxidative deamination to produce ammonia and the pyruvoyl prosthetic group on the alpha chain.

The protein resides in the cell membrane. The catalysed reaction is a 1,2-diacyl-sn-glycero-3-phospho-L-serine + H(+) = a 1,2-diacyl-sn-glycero-3-phosphoethanolamine + CO2. It participates in phospholipid metabolism; phosphatidylethanolamine biosynthesis; phosphatidylethanolamine from CDP-diacylglycerol: step 2/2. Functionally, catalyzes the formation of phosphatidylethanolamine (PtdEtn) from phosphatidylserine (PtdSer). The protein is Phosphatidylserine decarboxylase proenzyme of Brucella abortus (strain S19).